Consider the following 33-residue polypeptide: Mu-theraphotoxin-Ssp1a (33 aa).

Cystine bridges form between cysteine 2-cysteine 17, cysteine 9-cysteine 22, and cysteine 16-cysteine 29. Leucine 33 carries the leucine amide modification.

It belongs to the neurotoxin 10 (Hwtx-1) family. 22 (Htx-4) subfamily. In terms of tissue distribution, expressed by the venom gland.

The protein resides in the secreted. Functionally, gating modifier toxin that traps voltage-sensing domain II of voltage-gated sodium channels in the resting state without significantly altering the voltage-dependence of activation and inactivation, or delay in recovery from inactivation. Inhibits hNav1.7/SCN9A (IC(50)=134 nM), followed in rank order of potency by Nav1.6/SCN8A (IC(50)=191 nM), Nav1.2/SCN2A (IC(50)=239 nM), Nav1.3/SCN3A (IC(50)=547 nM) and Nav1.1/SCN1A (IC(50)=674 nM). Its binding to Nav1.2, Nav1.3 and Nav1.7 is slowly reversible and incomplete, with ~25% of Nav1.2, ~50% of Nav1.3 and ~40% of Nav1.7 channels recovering from block after a 30 minutes washout, respectively. Binds in the aqueous cleft formed between the S1-S2 and S3-S4 loops of each channel subtype, primarily targeting the S3-S4 loop. The protein is Mu-theraphotoxin-Ssp1a of Selenotypus sp. (Feather-legged tarantula).